The chain runs to 99 residues: Nucleoid-associated protein EbfC (99 aa).

It belongs to the YbaB/EbfC family. In terms of assembly, homodimer.

The protein resides in the cytoplasm. The protein localises to the nucleoid. Its function is as follows. Binds to DNA and alters its conformation. May be involved in regulation of gene expression, nucleoid organization and DNA protection. This Borrelia duttonii (strain Ly) protein is Nucleoid-associated protein EbfC.